We begin with the raw amino-acid sequence, 142 residues long: Ig heavy chain V region IR2 (142 aa).

The N-terminal stretch at 1–19 is a signal peptide; that stretch reads MDLRLTYVFIVAILKGVLC. The Ig-like domain occupies 20-133; the sequence is EVKLEESGGG…YSENWFVYWG (114 aa).

The protein is Ig heavy chain V region IR2 of Rattus norvegicus (Rat).